Reading from the N-terminus, the 177-residue chain is ADP-ribosylation factor-like protein 17 (177 aa).

Gly2 carries the N-myristoyl glycine lipid modification. GTP-binding positions include 24 to 31 (SLDTAGKT), 67 to 71 (DVGSH), and 125 to 128 (LPHS).

This sequence belongs to the small GTPase superfamily. Arf family.

The protein localises to the golgi apparatus. Its function is as follows. GTP-binding protein that functions as an allosteric activator of the cholera toxin catalytic subunit, an ADP-ribosyltransferase. Involved in protein trafficking; may modulate vesicle budding and uncoating within the Golgi apparatus. The sequence is that of ADP-ribosylation factor-like protein 17 (ARL17A) from Homo sapiens (Human).